A 288-amino-acid chain; its full sequence is Elongation factor Ts (288 aa).

Residues 82–85 are involved in Mg(2+) ion dislocation from EF-Tu; the sequence is TDFV.

The protein belongs to the EF-Ts family.

Its subcellular location is the cytoplasm. Functionally, associates with the EF-Tu.GDP complex and induces the exchange of GDP to GTP. It remains bound to the aminoacyl-tRNA.EF-Tu.GTP complex up to the GTP hydrolysis stage on the ribosome. The protein is Elongation factor Ts of Prosthecochloris aestuarii (strain DSM 271 / SK 413).